The primary structure comprises 280 residues: Shikimate dehydrogenase (NADP(+)) (280 aa).

Shikimate contacts are provided by residues 15 to 17 and Thr62; that span reads SLS. The Proton acceptor role is filled by Lys66. Shikimate contacts are provided by Asn88 and Asp104. Residues 128 to 132, 151 to 156, and Ile222 each bind NADP(+); these read GAGGA and NRTEER. Tyr224 provides a ligand contact to shikimate. Gly245 contributes to the NADP(+) binding site.

This sequence belongs to the shikimate dehydrogenase family. In terms of assembly, homodimer.

The catalysed reaction is shikimate + NADP(+) = 3-dehydroshikimate + NADPH + H(+). Its pathway is metabolic intermediate biosynthesis; chorismate biosynthesis; chorismate from D-erythrose 4-phosphate and phosphoenolpyruvate: step 4/7. In terms of biological role, involved in the biosynthesis of the chorismate, which leads to the biosynthesis of aromatic amino acids. Catalyzes the reversible NADPH linked reduction of 3-dehydroshikimate (DHSA) to yield shikimate (SA). In Methanosarcina mazei (strain ATCC BAA-159 / DSM 3647 / Goe1 / Go1 / JCM 11833 / OCM 88) (Methanosarcina frisia), this protein is Shikimate dehydrogenase (NADP(+)).